Consider the following 253-residue polypeptide: UPF0174 protein jhp_1494 (253 aa).

Belongs to the UPF0174 family.

The protein is UPF0174 protein jhp_1494 of Helicobacter pylori (strain J99 / ATCC 700824) (Campylobacter pylori J99).